The chain runs to 186 residues: Probable chorismate pyruvate-lyase (186 aa).

3 residues coordinate substrate: Arg-77, Leu-115, and Glu-174.

It belongs to the UbiC family.

It is found in the cytoplasm. The enzyme catalyses chorismate = 4-hydroxybenzoate + pyruvate. It functions in the pathway cofactor biosynthesis; ubiquinone biosynthesis. Its function is as follows. Removes the pyruvyl group from chorismate, with concomitant aromatization of the ring, to provide 4-hydroxybenzoate (4HB) for the ubiquinone pathway. The chain is Probable chorismate pyruvate-lyase from Shewanella sp. (strain W3-18-1).